We begin with the raw amino-acid sequence, 617 residues long: Zinc finger protein 613 (617 aa).

Residues 8–78 (LTLEDVAVEF…ENEIHSQICP (71 aa)) form the KRAB domain. C2H2-type zinc fingers lie at residues 204–226 (HVCTECGKAFLKKSRLIYHQRVH), 232–254 (HGCSICGKAFSRKSGLTEHQRNH), 260–282 (YECTECDKAFRWKSQLNAHQKIH), 288–310 (YICSDCGKGFIKKSRLINHQRVH), 316–338 (HGCSLCGKAFSKRSRLTEHQRTH), 344–366 (YECTECDKAFRWKSQLNAHQKAH), 372–394 (YICRDCGKGFIQKGNLIVHQRIH), 400–422 (YICNECGKGFIQKGNLLIHRRTH), 428–450 (YVCNECGKGFSQKTCLISHQRFH), 456–478 (FVCTECGKSCSHKSGLINHQRIH), 484–506 (YTCSDCGKAFRDKSCLNRHRRTH), and 512–535 (YGCSDCGKAFSHLSCLVYHKGMLH).

This sequence belongs to the krueppel C2H2-type zinc-finger protein family.

It is found in the nucleus. May be involved in transcriptional regulation. The chain is Zinc finger protein 613 (ZNF613) from Homo sapiens (Human).